A 396-amino-acid chain; its full sequence is Tryptophan synthase beta chain (396 aa).

Lysine 86 is subject to N6-(pyridoxal phosphate)lysine.

Belongs to the TrpB family. In terms of assembly, tetramer of two alpha and two beta chains. It depends on pyridoxal 5'-phosphate as a cofactor.

The catalysed reaction is (1S,2R)-1-C-(indol-3-yl)glycerol 3-phosphate + L-serine = D-glyceraldehyde 3-phosphate + L-tryptophan + H2O. Its pathway is amino-acid biosynthesis; L-tryptophan biosynthesis; L-tryptophan from chorismate: step 5/5. Functionally, the beta subunit is responsible for the synthesis of L-tryptophan from indole and L-serine. This Sodalis glossinidius (strain morsitans) protein is Tryptophan synthase beta chain.